Reading from the N-terminus, the 526-residue chain is ATP synthase subunit alpha (526 aa).

171–178 (GDRQTGKT) contacts ATP.

This sequence belongs to the ATPase alpha/beta chains family. As to quaternary structure, F-type ATPases have 2 components, CF(1) - the catalytic core - and CF(0) - the membrane proton channel. CF(1) has five subunits: alpha(3), beta(3), gamma(1), delta(1), epsilon(1). CF(0) has four main subunits: a(1), b(1), b'(1) and c(9-12).

The protein resides in the cell inner membrane. It catalyses the reaction ATP + H2O + 4 H(+)(in) = ADP + phosphate + 5 H(+)(out). In terms of biological role, produces ATP from ADP in the presence of a proton gradient across the membrane. The alpha chain is a regulatory subunit. The sequence is that of ATP synthase subunit alpha from Chlorobium chlorochromatii (strain CaD3).